Here is a 358-residue protein sequence, read N- to C-terminus: Adenosine deaminase (358 aa).

Zn(2+) contacts are provided by histidine 14 and histidine 16. Residues histidine 16, aspartate 18, and glycine 183 each coordinate substrate. Residue histidine 212 coordinates Zn(2+). Catalysis depends on glutamate 215, which acts as the Proton donor. Aspartate 294 provides a ligand contact to Zn(2+). Aspartate 295 contacts substrate.

It belongs to the metallo-dependent hydrolases superfamily. Adenosine and AMP deaminases family. It depends on Zn(2+) as a cofactor.

The protein resides in the cell membrane. Its subcellular location is the cell junction. It is found in the cytoplasmic vesicle lumen. It localises to the cytoplasm. The protein localises to the lysosome. The catalysed reaction is adenosine + H2O + H(+) = inosine + NH4(+). It carries out the reaction 2'-deoxyadenosine + H2O + H(+) = 2'-deoxyinosine + NH4(+). Its function is as follows. Catalyzes the hydrolytic deamination of adenosine and 2-deoxyadenosine. Plays an important role in purine metabolism and in adenosine homeostasis. Modulates signaling by extracellular adenosine, and so contributes indirectly to cellular signaling events. May act as a positive regulator of T-cell coactivation. The polypeptide is Adenosine deaminase (ada) (Xenopus laevis (African clawed frog)).